We begin with the raw amino-acid sequence, 310 residues long: Small ribosomal subunit biogenesis GTPase RsgA (310 aa).

In terms of domain architecture, CP-type G spans Leu-77–Phe-238. GTP-binding positions include Asn-126–Asp-129 and Gly-180–Thr-188. Positions 262, 267, 269, and 275 each coordinate Zn(2+).

The protein belongs to the TRAFAC class YlqF/YawG GTPase family. RsgA subfamily. In terms of assembly, monomer. Associates with 30S ribosomal subunit, binds 16S rRNA. It depends on Zn(2+) as a cofactor.

It localises to the cytoplasm. Functionally, one of several proteins that assist in the late maturation steps of the functional core of the 30S ribosomal subunit. Helps release RbfA from mature subunits. May play a role in the assembly of ribosomal proteins into the subunit. Circularly permuted GTPase that catalyzes slow GTP hydrolysis, GTPase activity is stimulated by the 30S ribosomal subunit. The protein is Small ribosomal subunit biogenesis GTPase RsgA of Bacteroides fragilis (strain YCH46).